Here is a 123-residue protein sequence, read N- to C-terminus: Small ribosomal subunit protein uS11 (123 aa).

Residues 1–22 form a disordered region; sequence MAKKRKKKLSSPEGISHIHASA.

This sequence belongs to the universal ribosomal protein uS11 family. As to quaternary structure, part of the 30S ribosomal subunit. Interacts with proteins S7 and S18. Binds to IF-3.

Located on the platform of the 30S subunit, it bridges several disparate RNA helices of the 16S rRNA. Forms part of the Shine-Dalgarno cleft in the 70S ribosome. The protein is Small ribosomal subunit protein uS11 of Malacoplasma penetrans (strain HF-2) (Mycoplasma penetrans).